Consider the following 373-residue polypeptide: GPN-loop GTPase 1 (373 aa).

N-acetylalanine is present on alanine 2. 29 to 34 lines the GTP pocket; the sequence is GSGKTT. The Gly-Pro-Asn (GPN)-loop; involved in dimer interface motif lies at 86–88; that stretch reads GPN. 189 to 192 provides a ligand contact to GTP; it reads NKTD. Residues serine 301, serine 312, and serine 314 each carry the phosphoserine modification. The interval 304 to 373 is disordered; it reads LDTGTATGSS…SMAQYWKKNK (70 aa). Threonine 328 carries the post-translational modification Phosphothreonine. A compositionally biased stretch (acidic residues) spans 330 to 342; sequence DEEDEEADSDTDD. Serine 338 carries the post-translational modification Phosphoserine. Threonine 340 is modified (phosphothreonine). Basic and acidic residues predominate over residues 343–355; sequence IDHRVTEESREEP.

Belongs to the GPN-loop GTPase family. Heterodimer with GPN3. Binds to RNA polymerase II (RNAPII). Interacts directly with RNAPII subunits RPB4 and RPB7 and the CTD of RPB1. Interacts with XPA.

The protein resides in the cytoplasm. The protein localises to the nucleus. Functionally, small GTPase required for proper nuclear import of RNA polymerase II (RNAPII). May act at an RNAP assembly step prior to nuclear import. Forms an interface between the RNA polymerase II enzyme and chaperone/scaffolding proteins, suggesting that it is required to connect RNA polymerase II to regulators of protein complex formation. May be involved in nuclear localization of XPA. This Bos taurus (Bovine) protein is GPN-loop GTPase 1.